The primary structure comprises 336 residues: Aspartate--ammonia ligase (336 aa).

It belongs to the class-II aminoacyl-tRNA synthetase family. AsnA subfamily.

It is found in the cytoplasm. The catalysed reaction is L-aspartate + NH4(+) + ATP = L-asparagine + AMP + diphosphate + H(+). It functions in the pathway amino-acid biosynthesis; L-asparagine biosynthesis; L-asparagine from L-aspartate (ammonia route): step 1/1. The sequence is that of Aspartate--ammonia ligase from Lactobacillus acidophilus (strain ATCC 700396 / NCK56 / N2 / NCFM).